The following is a 228-amino-acid chain: Ribose-5-phosphate isomerase A (228 aa).

Substrate is bound by residues 32–35, 85–88, and 98–101; these read TGST, DGAD, and KGGG. The active-site Proton acceptor is glutamate 107. Lysine 125 serves as a coordination point for substrate.

Belongs to the ribose 5-phosphate isomerase family. Homodimer.

The enzyme catalyses aldehydo-D-ribose 5-phosphate = D-ribulose 5-phosphate. It participates in carbohydrate degradation; pentose phosphate pathway; D-ribose 5-phosphate from D-ribulose 5-phosphate (non-oxidative stage): step 1/1. Catalyzes the reversible conversion of ribose-5-phosphate to ribulose 5-phosphate. The sequence is that of Ribose-5-phosphate isomerase A from Cupriavidus pinatubonensis (strain JMP 134 / LMG 1197) (Cupriavidus necator (strain JMP 134)).